The sequence spans 260 residues: Mantle protein (260 aa).

A signal peptide spans 1-16; that stretch reads MLAVLLFAALVATAYS.

As to expression, prismatic layer of shell (at protein level). Expressed primarily in the mantle with highest level in the mantle edge and lower level in the mantle pallium.

It is found in the secreted. This Pinctada maxima (Silver-lipped pearl oyster) protein is Mantle protein.